The primary structure comprises 148 residues: Tetratricopeptide repeat protein 32 (148 aa).

TPR repeat units lie at residues 12-45 (SSAALATAQARFSRGEFAEARELYSAFIGQCARH), 55-88 (ATAYNNRGQTKYFSVDFYEAMDDYTSAIEILPSF), and 89-122 (EVPYYNRGLIRYRLGYFDEALEDFKKALDLNPGF).

This chain is Tetratricopeptide repeat protein 32 (Ttc32), found in Mus musculus (Mouse).